Reading from the N-terminus, the 248-residue chain is MKSYIEPFIASKALSQNSQKAYRYDLQQFCQLVGERVNQDKLLLYQNSIANLSLSAKKRKLSTANQFLYYLYQIKYLNSYFRLTDTMKVMRTEKQQAAIINTDIFYQKTPFVWGQLISLLILELGLTPSEVAGIEVANLDLNFQMLTLKTKKGVRVLPLSQILIPFLEQQLIGKEVYLFEHRGIPFSRQWFFNHLKTFVRSIGYEGLTAQKLREQFILKEKLAGKSIIELSDILGLKSPVTLEKYYKS.

In terms of domain architecture, Core-binding (CB) spans 1-72 (MKSYIEPFIA…TANQFLYYLY (72 aa)). Residues 85-248 (DTMKVMRTEK…PVTLEKYYKS (164 aa)) enclose the Tyr recombinase domain. Active-site residues include lysine 149 and arginine 213. Catalysis depends on tyrosine 245, which acts as the O-(3'-phospho-DNA)-tyrosine intermediate.

Belongs to the 'phage' integrase family. XerD-like subfamily.

The protein localises to the cytoplasm. Putative tyrosine recombinase. Not involved in the cutting and rejoining of the recombining DNA molecules on dif(SL) site. The chain is Tyrosine recombinase XerD-like from Streptococcus pyogenes serotype M4 (strain MGAS10750).